A 506-amino-acid chain; its full sequence is GMP synthase [glutamine-hydrolyzing] (506 aa).

A Glutamine amidotransferase type-1 domain is found at 3–188; the sequence is GFVILDFGSQ…AQGMCKAPAD (186 aa). Cys80 (nucleophile) is an active-site residue. Active-site residues include His162 and Glu164. Positions 189 to 381 constitute a GMPS ATP-PPase domain; the sequence is WDAPHIKDIL…LGLPKEMLWR (193 aa). 217–223 contributes to the ATP binding site; that stretch reads SGGVDST.

As to quaternary structure, homodimer.

The catalysed reaction is XMP + L-glutamine + ATP + H2O = GMP + L-glutamate + AMP + diphosphate + 2 H(+). The protein operates within purine metabolism; GMP biosynthesis; GMP from XMP (L-Gln route): step 1/1. In terms of biological role, catalyzes the synthesis of GMP from XMP. This is GMP synthase [glutamine-hydrolyzing] from Bdellovibrio bacteriovorus (strain ATCC 15356 / DSM 50701 / NCIMB 9529 / HD100).